A 239-amino-acid chain; its full sequence is Small ribosomal subunit protein uS3 (239 aa).

The 69-residue stretch at 39-107 (VRQVLRKKMS…SVHINVIEVR (69 aa)) folds into the KH type-2 domain. Residues 214 to 239 (GQEKQDDGSRGDRNADRSSRRSREVR) form a disordered region. Positions 216–239 (EKQDDGSRGDRNADRSSRRSREVR) are enriched in basic and acidic residues.

The protein belongs to the universal ribosomal protein uS3 family. Part of the 30S ribosomal subunit. Forms a tight complex with proteins S10 and S14.

Binds the lower part of the 30S subunit head. Binds mRNA in the 70S ribosome, positioning it for translation. The sequence is that of Small ribosomal subunit protein uS3 from Xylella fastidiosa (strain M12).